The sequence spans 161 residues: S-ribosylhomocysteine lyase (161 aa).

The Fe cation site is built by histidine 53, histidine 57, and cysteine 124.

Belongs to the LuxS family. As to quaternary structure, homodimer. It depends on Fe cation as a cofactor.

It catalyses the reaction S-(5-deoxy-D-ribos-5-yl)-L-homocysteine = (S)-4,5-dihydroxypentane-2,3-dione + L-homocysteine. Involved in the synthesis of autoinducer 2 (AI-2) which is secreted by bacteria and is used to communicate both the cell density and the metabolic potential of the environment. The regulation of gene expression in response to changes in cell density is called quorum sensing. Catalyzes the transformation of S-ribosylhomocysteine (RHC) to homocysteine (HC) and 4,5-dihydroxy-2,3-pentadione (DPD). The protein is S-ribosylhomocysteine lyase of Phocaeicola vulgatus (strain ATCC 8482 / DSM 1447 / JCM 5826 / CCUG 4940 / NBRC 14291 / NCTC 11154) (Bacteroides vulgatus).